The sequence spans 662 residues: Transketolase (662 aa).

Residue His28 coordinates substrate. Thiamine diphosphate-binding positions include His68 and 115-117 (GPL). Asp156 is a binding site for Mg(2+). Thiamine diphosphate is bound by residues Gly157 and Asn186. The Mg(2+) site is built by Asn186 and Ile188. Substrate contacts are provided by His261, Arg356, and Ser383. Thiamine diphosphate is bound at residue His261. The Proton donor role is filled by Glu410. Phe436 provides a ligand contact to thiamine diphosphate. Substrate contacts are provided by His460, Asp468, and Arg519.

It belongs to the transketolase family. Homodimer. Mg(2+) serves as cofactor. It depends on Ca(2+) as a cofactor. The cofactor is Mn(2+). Requires Co(2+) as cofactor. Thiamine diphosphate is required as a cofactor.

It catalyses the reaction D-sedoheptulose 7-phosphate + D-glyceraldehyde 3-phosphate = aldehydo-D-ribose 5-phosphate + D-xylulose 5-phosphate. Its pathway is carbohydrate biosynthesis; Calvin cycle. The protein operates within carbohydrate degradation; pentose phosphate pathway. Functionally, catalyzes the transfer of a two-carbon ketol group from a ketose donor to an aldose acceptor, via a covalent intermediate with the cofactor thiamine pyrophosphate. This Staphylococcus aureus (strain MRSA252) protein is Transketolase (tkt).